Consider the following 321-residue polypeptide: Fimbria adhesin protein (321 aa).

The N-terminal stretch at 1 to 18 (MKKLTLFIGLMALGTTSA) is a signal peptide.

Belongs to the fimbrial protein family.

It localises to the fimbrium. This is Fimbria adhesin protein (mrkD) from Klebsiella pneumoniae.